We begin with the raw amino-acid sequence, 197 residues long: Lipoprotein signal peptidase (197 aa).

The next 2 membrane-spanning stretches (helical) occupy residues 73-93 (SNAI…YLMI) and 97-117 (TIGS…NLID). Catalysis depends on residues Asp126 and Asp144. Residues 135 to 155 (YSFPVFNLADCFITIGVIILI) form a helical membrane-spanning segment.

The protein belongs to the peptidase A8 family.

Its subcellular location is the cell inner membrane. The catalysed reaction is Release of signal peptides from bacterial membrane prolipoproteins. Hydrolyzes -Xaa-Yaa-Zaa-|-(S,diacylglyceryl)Cys-, in which Xaa is hydrophobic (preferably Leu), and Yaa (Ala or Ser) and Zaa (Gly or Ala) have small, neutral side chains.. It participates in protein modification; lipoprotein biosynthesis (signal peptide cleavage). Its function is as follows. This protein specifically catalyzes the removal of signal peptides from prolipoproteins. In Rickettsia felis (strain ATCC VR-1525 / URRWXCal2) (Rickettsia azadi), this protein is Lipoprotein signal peptidase.